Here is a 605-residue protein sequence, read N- to C-terminus: Elongation factor 4 (605 aa).

Residues 10–192 enclose the tr-type G domain; the sequence is KNIRNFAIVA…AIVMRLPPPH (183 aa). GTP contacts are provided by residues 22-27 and 139-142; these read DHGKST and NKVD.

The protein belongs to the TRAFAC class translation factor GTPase superfamily. Classic translation factor GTPase family. LepA subfamily.

It localises to the cell inner membrane. The catalysed reaction is GTP + H2O = GDP + phosphate + H(+). Functionally, required for accurate and efficient protein synthesis under certain stress conditions. May act as a fidelity factor of the translation reaction, by catalyzing a one-codon backward translocation of tRNAs on improperly translocated ribosomes. Back-translocation proceeds from a post-translocation (POST) complex to a pre-translocation (PRE) complex, thus giving elongation factor G a second chance to translocate the tRNAs correctly. Binds to ribosomes in a GTP-dependent manner. The protein is Elongation factor 4 of Chelativorans sp. (strain BNC1).